Here is a 271-residue protein sequence, read N- to C-terminus: 2,3,4,5-tetrahydropyridine-2,6-dicarboxylate N-succinyltransferase (271 aa).

Belongs to the transferase hexapeptide repeat family.

Its subcellular location is the cytoplasm. It carries out the reaction (S)-2,3,4,5-tetrahydrodipicolinate + succinyl-CoA + H2O = (S)-2-succinylamino-6-oxoheptanedioate + CoA. It participates in amino-acid biosynthesis; L-lysine biosynthesis via DAP pathway; LL-2,6-diaminopimelate from (S)-tetrahydrodipicolinate (succinylase route): step 1/3. This is 2,3,4,5-tetrahydropyridine-2,6-dicarboxylate N-succinyltransferase from Coxiella burnetii (strain CbuG_Q212) (Coxiella burnetii (strain Q212)).